Reading from the N-terminus, the 63-residue chain is Large ribosomal subunit protein uL30 (63 aa).

This sequence belongs to the universal ribosomal protein uL30 family. As to quaternary structure, part of the 50S ribosomal subunit.

This is Large ribosomal subunit protein uL30 from Caulobacter sp. (strain K31).